The primary structure comprises 405 residues: Proline-rich P65 protein (405 aa).

A disordered region spans residues 1–58 (MDINKPGWNQSDQQATAYDPNQQQYYGDGSTYYDPDQAVDPNQAYYPDPNTYPDAAAY). The span at 7-25 (GWNQSDQQATAYDPNQQQY) shows a compositional bias: polar residues. 12 consecutive repeat copies span residues 40–45 (DPNQAY), 75–80 (DPNQAY), 83–87 (DPNAY), 89–93 (DPNAY), 95–99 (DPNAY), 101–105 (DPNAY), 107–111 (DPNAY), 119–123 (DPNAY), 140–145 (DPNQAY), 148–152 (DPNAY), 154–158 (DPNAY), and 168–172 (DPNAY). Residues 40-172 (DPNQAYYPDP…YVTSTDPNAY (133 aa)) form a 12 X 5 AA repeats of D-P-N-Q-A-Y region.

In terms of processing, the N-terminus is blocked.

It localises to the cell membrane. This chain is Proline-rich P65 protein (p65), found in Mycoplasma pneumoniae (strain ATCC 29342 / M129 / Subtype 1) (Mycoplasmoides pneumoniae).